The following is a 349-amino-acid chain: MTLGPIMLDVVGTELTQEDIRRIRHPLVGGVILFARNFESPAQLKALTDSIHAVRQPPLLIAVDHEGGRVQRFREGFTRIPPMREFGKIWDEHPRKARQLAEEAGWIIAAELRAHGIDFSFTPVLDMDYGESQVIGDRAFHGDRQAINELAFSLMQGLKRGGMAAVGKHFPGHGYVVADSHVAIPVDERDFDQIASTDMQTFRQLIDDGIQAIMPAHVIYPKVDNKPAGFSERWLQKVLRQRLGFNGVIFSDDLSMEGAGVVGDVTQRALAALNAGCDMVLLCNQPDKADELLANLKWDIQAQSLARLARMHGGRHPSSMVALHEDPDFMHAVHRVGQVGKADGDLPFA.

Substrate is bound by residues Asp-64, Arg-72, Arg-138, and 168–169 (KH). His-181 functions as the Proton donor/acceptor in the catalytic mechanism. Residue Asp-252 is the Nucleophile of the active site.

Belongs to the glycosyl hydrolase 3 family. NagZ subfamily.

The protein localises to the cytoplasm. The enzyme catalyses Hydrolysis of terminal non-reducing N-acetyl-D-hexosamine residues in N-acetyl-beta-D-hexosaminides.. Its pathway is cell wall biogenesis; peptidoglycan recycling. Its function is as follows. Plays a role in peptidoglycan recycling by cleaving the terminal beta-1,4-linked N-acetylglucosamine (GlcNAc) from peptide-linked peptidoglycan fragments, giving rise to free GlcNAc, anhydro-N-acetylmuramic acid and anhydro-N-acetylmuramic acid-linked peptides. The protein is Beta-hexosaminidase of Methylobacillus flagellatus (strain ATCC 51484 / DSM 6875 / VKM B-1610 / KT).